The following is a 366-amino-acid chain: MKFVISRNELGNLIKKVQNVVPQSTPIPVLTHVLIESCNDELVFTATDLTVSTRCVVKAKVYESGSVTIPSRRFFQLIRELTEANIEVAANSGEMATITSGSSCFRLLSMGKEDFPMLPDMQNALRFTLDSEQLKDMFQRTSFAVSREESRYVLTGVLLSISNGTMTVVGTDGKRLAKIDTNISLDPSFSGDYIIPIKAVEEIIRMASEDVQSTIFLDQTKIAVECGNTLLVTKLLSGEFPDFSPVISTQSSVQLNLHREELISLLKQVALFTNESSHSVKFSFSPGELTLTANCTKVGEGKVSMAVNYTGETLEIAFNPFFFLDILKHSRDELVQLGISDSYNPGIITDSTRSLFVIMPMRLHDD.

This sequence belongs to the beta sliding clamp family. Forms a ring-shaped head-to-tail homodimer around DNA which binds and tethers DNA polymerases and other proteins to the DNA. The DNA replisome complex has a single clamp-loading complex (3 tau and 1 each of delta, delta', psi and chi subunits) which binds 3 Pol III cores (1 core on the leading strand and 2 on the lagging strand) each with a beta sliding clamp dimer. Additional proteins in the replisome are other copies of gamma, psi and chi, Ssb, DNA helicase and RNA primase.

The protein localises to the cytoplasm. Functionally, confers DNA tethering and processivity to DNA polymerases and other proteins. Acts as a clamp, forming a ring around DNA (a reaction catalyzed by the clamp-loading complex) which diffuses in an ATP-independent manner freely and bidirectionally along dsDNA. Initially characterized for its ability to contact the catalytic subunit of DNA polymerase III (Pol III), a complex, multichain enzyme responsible for most of the replicative synthesis in bacteria; Pol III exhibits 3'-5' exonuclease proofreading activity. The beta chain is required for initiation of replication as well as for processivity of DNA replication. The chain is Beta sliding clamp (dnaN) from Chlamydia muridarum (strain MoPn / Nigg).